Consider the following 605-residue polypeptide: Formin-binding protein 1-like (605 aa).

The 263-residue stretch at 1 to 263 folds into the F-BAR domain; that stretch reads MSWGTELWDQ…AAKSVDERRD (263 aa). Positions 66–258 form a coiled coil; that stretch reads FTSCVAFFNI…EGMILAAKSV (193 aa). Positions 245–535 are interaction with CDC42; it reads SKCLEGMILA…EFDDEFEDDD (291 aa). Residue serine 295 is modified to Phosphoserine. A coiled-coil region spans residues 392 to 484; the sequence is LEDFSHLPPE…VEGKTGGRGD (93 aa). One can recognise an REM-1 domain in the interval 397–474; it reads HLPPEQRRKK…IHKNEAWLSE (78 aa). Over residues 476 to 490 the composition is skewed to basic and acidic residues; sequence EGKTGGRGDRRHSSD. The tract at residues 476-539 is disordered; that stretch reads EGKTGGRGDR…EFEDDDPLPA (64 aa). Residues serine 488, serine 501, and serine 505 each carry the phosphoserine modification. The segment at 522–605 is interaction with DNM1; sequence GHHNEFDDEF…VTLEKNSKGS (84 aa). Residues 527 to 536 are compositionally biased toward acidic residues; the sequence is FDDEFEDDDP. Positions 538-599 constitute an SH3 domain; the sequence is PAIGHCKAIY…PTSYIDVTLE (62 aa). An interaction with DNM2 and WASL region spans residues 541–597; that stretch reads GHCKAIYPFDGHNEGTLAMKEGEVLYIIEEDKGDGWTRARRQNGEEGYVPTSYIDVT. Residues 541–605 are interaction with DAAM1, DIAPH1 and DIAPH2; sequence GHCKAIYPFD…VTLEKNSKGS (65 aa).

This sequence belongs to the FNBP1 family. As to quaternary structure, homodimerizes, the dimers can polymerize end-to-end to form filamentous structures. Interacts with GTP-bound CDC42. Interacts with DAAM1, DIAPH1, DIAPH2, DNM1, DNM2 and WASL/N-WASP. Interacts with ATG3. Interacts (via SH3 domain) with ABI1, WASF2, CDC42 and WIPF1.

The protein localises to the cytoplasm. Its subcellular location is the cytoskeleton. It localises to the cell cortex. It is found in the cytoplasmic vesicle. The protein resides in the cell membrane. Functionally, required to coordinate membrane tubulation with reorganization of the actin cytoskeleton during endocytosis. May bind to lipids such as phosphatidylinositol 4,5-bisphosphate and phosphatidylserine and promote membrane invagination and the formation of tubules. Also promotes CDC42-induced actin polymerization by activating the WASL/N-WASP-WASPIP/WIP complex, the predominant form of WASL/N-WASP in cells. Actin polymerization may promote the fission of membrane tubules to form endocytic vesicles. Essential for autophagy of intracellular bacterial pathogens. This Homo sapiens (Human) protein is Formin-binding protein 1-like (FNBP1L).